The following is a 727-amino-acid chain: Bromodomain-containing protein C631.02 (727 aa).

2 disordered regions span residues 27 to 231 (AATI…PPMT) and 341 to 369 (TSYSRPGRRPRSMTAPKGGARTRRQAAMY). The span at 56 to 68 (ENDDGTLDLFGDS) shows a compositional bias: acidic residues. Residues 69 to 78 (ELEKEQKGDN) are compositionally biased toward basic and acidic residues. The segment covering 102-114 (PSSPTHPSVSNIT) has biased composition (polar residues). A compositionally biased stretch (basic and acidic residues) spans 128 to 150 (EEEKSSESLDSHTHPPKRVRNED). Residues 153-177 (LTFSKTSPVSPSSLKDGASNTVTND) are compositionally biased toward polar residues. At S162 the chain carries Phosphoserine. The span at 206–231 (SKEHSSPHDETVKKEENDKDQYPPMT) shows a compositional bias: basic and acidic residues. The Bromo 1 domain maps to 229-335 (PMTKEQHKYI…ATFERQLKQL (107 aa)). Positions 388–497 (RKDAAEMKFC…SIFQKLWANK (110 aa)) constitute a Bromo 2 domain. The region spanning 570–650 (RSLSVDIYPP…KGDEIGAEAL (81 aa)) is the NET domain. The interval 699-727 (IAAYNTKSLGSDDSSSEDDGESSESSDSA) is disordered. Residues 712 to 727 (SSSEDDGESSESSDSA) are compositionally biased toward acidic residues.

The protein belongs to the BET family.

It localises to the nucleus. The chain is Bromodomain-containing protein C631.02 from Schizosaccharomyces pombe (strain 972 / ATCC 24843) (Fission yeast).